The following is a 57-amino-acid chain: UPF0391 membrane protein AZOSEA39630 (57 aa).

Transmembrane regions (helical) follow at residues Trp4–Ala24 and Ile37–Phe57.

Belongs to the UPF0391 family.

It is found in the cell membrane. This chain is UPF0391 membrane protein AZOSEA39630, found in Aromatoleum aromaticum (strain DSM 19018 / LMG 30748 / EbN1) (Azoarcus sp. (strain EbN1)).